Here is a 268-residue protein sequence, read N- to C-terminus: Thiazole synthase (268 aa).

Lys108 functions as the Schiff-base intermediate with DXP in the catalytic mechanism. Residues Gly169, 195–196, and 217–218 each bind 1-deoxy-D-xylulose 5-phosphate; these read AG and NS. Positions 248–268 are disordered; sequence RLKENPLASPSSPLDGVISNN. The span at 255-268 shows a compositional bias: polar residues; the sequence is ASPSSPLDGVISNN.

The protein belongs to the ThiG family. Homotetramer. Forms heterodimers with either ThiH or ThiS.

Its subcellular location is the cytoplasm. The enzyme catalyses [ThiS sulfur-carrier protein]-C-terminal-Gly-aminoethanethioate + 2-iminoacetate + 1-deoxy-D-xylulose 5-phosphate = [ThiS sulfur-carrier protein]-C-terminal Gly-Gly + 2-[(2R,5Z)-2-carboxy-4-methylthiazol-5(2H)-ylidene]ethyl phosphate + 2 H2O + H(+). The protein operates within cofactor biosynthesis; thiamine diphosphate biosynthesis. In terms of biological role, catalyzes the rearrangement of 1-deoxy-D-xylulose 5-phosphate (DXP) to produce the thiazole phosphate moiety of thiamine. Sulfur is provided by the thiocarboxylate moiety of the carrier protein ThiS. In vitro, sulfur can be provided by H(2)S. This Prochlorococcus marinus (strain NATL2A) protein is Thiazole synthase.